The chain runs to 498 residues: Diacylglycerol O-acyltransferase 1 (498 aa).

The tract at residues 1–66 (MGDRGGAGSS…AHTRDKDRQT (66 aa)) is disordered. At 1–92 (MGDRGGAGSS…SLFSSDSGFS (92 aa)) the chain is on the cytoplasmic side. Residues 1–96 (MGDRGGAGSS…SDSGFSNYRG (96 aa)) are involved in homomerization. Ser20 carries the phosphoserine modification. Positions 58–68 (HTRDKDRQTSV) are enriched in basic and acidic residues. Residues 93–127 (NYRGILNWCVVMLILSNARLSLENLIKYGILVDPI) form a helical membrane-spanning segment. Residues 128-139 (QVVSLFLKDPYS) are Lumenal-facing. The segment at 128-139 (QVVSLFLKDPYS) is extracellular loop 1 (EL1). The chain crosses the membrane as a helical span at residues 140-165 (WPAPCLIIASNIFIVATFQIEKRLSV). The tract at residues 140–498 (WPAPCLIIAS…VLNYDAPVGA (359 aa)) is MBOAT fold. Topologically, residues 166 to 170 (GALTE) are cytoplasmic. The chain crosses the membrane as a helical span at residues 171 to 193 (QMGLLLHVVNLATIICFPAAVAL). Topologically, residues 194–200 (LVESITP) are lumenal. Residues 201-232 (VGSLFALASYSIIFLKLSSYRDVNLWCRQRRV) form a helical membrane-spanning segment. Topologically, residues 233–284 (KAKAVSAGKKVSGAAAQNTVSYPDNLTYRDLYYFIFAPTLCYELNFPRSPRI) are cytoplasmic. The intracellular loop 1 (IL1) stretch occupies residues 235 to 287 (KAVSAGKKVSGAAAQNTVSYPDNLTYRDLYYFIFAPTLCYELNFPRSPRIRKR). The chain crosses the membrane as a helical span at residues 285–319 (RKRFLLRRVLEMLFFTQLQVGLIQQWMVPTIQNSM). Over 320 to 326 (KPFKDMD) the chain is Lumenal. The chain crosses the membrane as a helical span at residues 327 to 364 (YSRIIERLLKLAVPNHLIWLIFFYWLFHSCLNAVAELL). The Cytoplasmic segment spans residues 365 to 410 (QFGDREFYRDWWNAESVTYFWQNWNIPVHKWCIRHFYKPMLRLGSN). The tract at residues 365–410 (QFGDREFYRDWWNAESVTYFWQNWNIPVHKWCIRHFYKPMLRLGSN) is intracellular loop 2 (IL2). The FYXDWWN motif signature appears at 371–377 (FYRDWWN). An acyl-CoA contacts are provided by residues 385 to 393 (WQNWNIPVH), Tyr401, and Arg415. Residues 391–405 (PVHKWCIRHFYKPML) are amphipathic helix (AH). A helical transmembrane segment spans residues 411–431 (KWMARTGVFWASAFFHEYLVS). The active site involves His426. Topologically, residues 432–439 (IPLRMFRL) are lumenal. A helical membrane pass occupies residues 440-458 (WAFTAMMAQVPLAWIVNRF). Residues 459–460 (FQ) lie on the Cytoplasmic side of the membrane. The chain crosses the membrane as a helical span at residues 461–492 (GNYGNAAVWVTLIIGQPVAVLMYVHDYYVLNY). Residue Tyr488 participates in an acyl-CoA binding. Residues 493-498 (DAPVGA) are Lumenal-facing.

This sequence belongs to the membrane-bound acyltransferase family. Sterol o-acyltransferase subfamily. As to quaternary structure, homodimer or homotetramer; both forms have similar enzymatic activities.

Its subcellular location is the endoplasmic reticulum membrane. It carries out the reaction an acyl-CoA + a 1,2-diacyl-sn-glycerol = a triacyl-sn-glycerol + CoA. The enzyme catalyses all-trans-retinol + an acyl-CoA = an all-trans-retinyl ester + CoA. It catalyses the reaction 2-(9Z-octadecenoyl)-glycerol + (9Z)-octadecenoyl-CoA = 1,2-di-(9Z-octadecenoyl)-sn-glycerol + CoA. The catalysed reaction is 1,2-di-(9Z-octadecenoyl)-sn-glycerol + (9Z)-octadecenoyl-CoA = 1,2,3-tri-(9Z-octadecenoyl)-glycerol + CoA. It carries out the reaction all-trans-retinol + hexadecanoyl-CoA = all-trans-retinyl hexadecanoate + CoA. The enzyme catalyses 1-O-(9Z-octadecenyl)-glycerol + (9Z)-octadecenoyl-CoA = 1-O-(9Z-octadecyl)-3-(9Z-octadecenoyl)-glycerol + CoA. It catalyses the reaction 1-O-(9Z-octadecyl)-3-(9Z-octadecenoyl)-glycerol + (9Z)-octadecenoyl-CoA = 1-O-(9Z-octadecenyl)-2,3-di-(9Z-octadecenoyl)glycerol + CoA. The catalysed reaction is 1-(9Z-octadecenoyl)-glycerol + (9Z)-octadecenoyl-CoA = 1,2-di-(9Z-octadecenoyl)-glycerol + CoA. It carries out the reaction 1,2-di-(9Z-octadecenoyl)-glycerol + (9Z)-octadecenoate + H(+) = 1,2,3-tri-(9Z-octadecenoyl)-glycerol + H2O. The enzyme catalyses 1-octadecanoyl-2-(5Z,8Z,11Z,14Z-eicosatetraenoyl)-sn-glycerol + (9Z)-octadecenoyl-CoA = 1-octadecanoyl-2-(5Z,8Z,11Z,14Z)-eicosatetraenoyl-3-(9Z)-octadecenoyl-sn-glycerol + CoA. It catalyses the reaction hexadecane-1,2-diol + 2 hexadecanoyl-CoA = 1,2-O,O-dihexadecanoyl-1,2-hexadecanediol + 2 CoA. The catalysed reaction is hexadecane-1,2-diol + hexadecanoyl-CoA = 2-hydroxyhexadecyl hexadecanoate + CoA. It carries out the reaction 2-(9Z-octadecenoyl)-glycerol + hexadecanoyl-CoA = 1-hexadecanoyl-2-(9Z-octadecenoyl)-sn-glycerol + CoA. The enzyme catalyses 1,2-di-(9Z-octadecenoyl)-sn-glycerol + hexadecanoyl-CoA = 1,2-di-(9Z)-octadecenoyl-3-hexadecanoyl-sn-glycerol + CoA. It catalyses the reaction hexadecan-1-ol + hexadecanoyl-CoA = hexadecanyl hexadecanoate + CoA. The catalysed reaction is 13-cis-retinol + hexadecanoyl-CoA = 13-cis-retinyl hexadecanoate + CoA. It carries out the reaction 1,3-di-(9Z-octadecenoyl)-glycerol + (9Z)-octadecenoyl-CoA = 1,2,3-tri-(9Z-octadecenoyl)-glycerol + CoA. The enzyme catalyses 2,3-di-(9Z)-octadecenoyl-sn-glycerol + (9Z)-octadecenoyl-CoA = 1,2,3-tri-(9Z-octadecenoyl)-glycerol + CoA. It participates in lipid metabolism; glycerolipid metabolism. Catalyzes the terminal and only committed step in triacylglycerol synthesis by using diacylglycerol and fatty acyl CoA as substrates. Highly expressed in epithelial cells of the small intestine and its activity is essential for the absorption of dietary fats. In liver, plays a role in esterifying exogenous fatty acids to glycerol, and is required to synthesize fat for storage. Also present in female mammary glands, where it produces fat in the milk. May be involved in VLDL (very low density lipoprotein) assembly. In contrast to DGAT2 it is not essential for survival. Functions as the major acyl-CoA retinol acyltransferase (ARAT) in the skin, where it acts to maintain retinoid homeostasis and prevent retinoid toxicity leading to skin and hair disorders. Exhibits additional acyltransferase activities, includin acyl CoA:monoacylglycerol acyltransferase (MGAT), wax monoester and wax diester synthases. Also able to use 1-monoalkylglycerol (1-MAkG) as an acyl acceptor for the synthesis of monoalkyl-monoacylglycerol (MAMAG). The sequence is that of Diacylglycerol O-acyltransferase 1 from Rattus norvegicus (Rat).